The sequence spans 375 residues: MLEANVYDNFNPNYYNVSDFSMPNGKKEKRGLPIPKARCQVINYELWETGYLYTSSATLTVSVEVGDIVQILFPEVVPIEEALGKKKKLNLDMVYLVTDVDESNKATLKNYFWAMIESLDVPNAITKTTNFAIIDYLIDPSKNNLMSYGYFFNSSIFAGKATINRKAETSSAHDVAKRIFSKVQFQPTTTIQHAPSETDPRNLLFINFASRNWNRKRITTRVDIKQSVTMDTETIVERSAYNFAVVFVKNKATDDYTDPPKMYIAKNNGDVIDYSTYHGDGTDLPDVRTAKTLFYDRDDHGNPPALSTIKVEISPSTIVTRLIFNQNELLPLYVNDLVDIWYEGKLYSGYIADRVKTEFNDRLIFVESGDKPNVI.

Belongs to the skunalikevirus baseplate protein gp16 family. In terms of assembly, homotrimer.

The protein localises to the virion. Forms a dome thereby closing the central channel at the end of the baseplate. Changes its conformation upon activation by calcium allowing the channel to open at the bottom of the baseplate for DNA ejection. In Lactococcus lactis (Lactococcus lactis bacteriophage SK1), this protein is Baseplate protein gp16.